The primary structure comprises 32 residues: Dermatoxin-J3 (32 aa).

Q32 is modified (glutamine amide).

Expressed by the skin glands.

It is found in the secreted. In terms of biological role, antimicrobial peptide. In Phasmahyla jandaia (Jandaia leaf frog), this protein is Dermatoxin-J3.